Reading from the N-terminus, the 288-residue chain is Bifunctional protein FolD (288 aa).

NADP(+) is bound by residues 166–168 (GAS) and Ile232.

Belongs to the tetrahydrofolate dehydrogenase/cyclohydrolase family. As to quaternary structure, homodimer.

The catalysed reaction is (6R)-5,10-methylene-5,6,7,8-tetrahydrofolate + NADP(+) = (6R)-5,10-methenyltetrahydrofolate + NADPH. The enzyme catalyses (6R)-5,10-methenyltetrahydrofolate + H2O = (6R)-10-formyltetrahydrofolate + H(+). The protein operates within one-carbon metabolism; tetrahydrofolate interconversion. Functionally, catalyzes the oxidation of 5,10-methylenetetrahydrofolate to 5,10-methenyltetrahydrofolate and then the hydrolysis of 5,10-methenyltetrahydrofolate to 10-formyltetrahydrofolate. In Salmonella heidelberg (strain SL476), this protein is Bifunctional protein FolD.